A 348-amino-acid chain; its full sequence is Dual-specificity RNA methyltransferase RlmN (348 aa).

The Proton acceptor role is filled by E94. The 231-residue stretch at G100–R330 folds into the Radical SAM core domain. An intrachain disulfide couples C107 to C336. C114, C118, and C121 together coordinate [4Fe-4S] cluster. Residues G163–E164, S195, S217–N219, and N293 each bind S-adenosyl-L-methionine. Catalysis depends on C336, which acts as the S-methylcysteine intermediate.

It belongs to the radical SAM superfamily. RlmN family. [4Fe-4S] cluster serves as cofactor.

It localises to the cytoplasm. It carries out the reaction adenosine(2503) in 23S rRNA + 2 reduced [2Fe-2S]-[ferredoxin] + 2 S-adenosyl-L-methionine = 2-methyladenosine(2503) in 23S rRNA + 5'-deoxyadenosine + L-methionine + 2 oxidized [2Fe-2S]-[ferredoxin] + S-adenosyl-L-homocysteine. The enzyme catalyses adenosine(37) in tRNA + 2 reduced [2Fe-2S]-[ferredoxin] + 2 S-adenosyl-L-methionine = 2-methyladenosine(37) in tRNA + 5'-deoxyadenosine + L-methionine + 2 oxidized [2Fe-2S]-[ferredoxin] + S-adenosyl-L-homocysteine. Its function is as follows. Specifically methylates position 2 of adenine 2503 in 23S rRNA and position 2 of adenine 37 in tRNAs. m2A2503 modification seems to play a crucial role in the proofreading step occurring at the peptidyl transferase center and thus would serve to optimize ribosomal fidelity. This is Dual-specificity RNA methyltransferase RlmN from Syntrophus aciditrophicus (strain SB).